The following is a 564-amino-acid chain: NAC domain-containing protein 16 (564 aa).

Positions 16–166 (SAPGFRFHPT…YYALYKLYKK (151 aa)) constitute an NAC domain. A DNA-binding region spans residues 115 to 172 (VGLKKTLVFYRGRAPNGERTDWVMHEYTMDEEELGRCKNAKEYYALYKLYKKSGAGPK). Residues 535–555 (FLLLSIMGALCAIFWVFKATV) traverse the membrane as a helical segment.

In terms of tissue distribution, expressed in roots, rosette leaves, shoot apex, stems and flowers.

The protein resides in the membrane. Its subcellular location is the nucleus. Its function is as follows. Transcriptional activator activated by proteolytic cleavage through regulated intramembrane proteolysis (RIP). Transcriptional activator that promotes leaf senescence by up-regulating senescence-associated genes in response to developmental and stress-induced senescence signals. Functions in salt and oxidative stress-responsive signaling pathways. Binds to the promoter of NAC029/NAP and NAC059/ORS1 genes. The polypeptide is NAC domain-containing protein 16 (Arabidopsis thaliana (Mouse-ear cress)).